We begin with the raw amino-acid sequence, 548 residues long: ATP synthase subunit alpha (548 aa).

172 to 179 (GDRKTGKT) contributes to the ATP binding site. Residues 511 to 548 (FETTSGESVVPDENVEAMSEDDVEKESVKVRKPAPKKK) are disordered. Residues 523–534 (ENVEAMSEDDVE) are compositionally biased toward acidic residues.

The protein belongs to the ATPase alpha/beta chains family. As to quaternary structure, F-type ATPases have 2 components, CF(1) - the catalytic core - and CF(0) - the membrane proton channel. CF(1) has five subunits: alpha(3), beta(3), gamma(1), delta(1), epsilon(1). CF(0) has three main subunits: a(1), b(2) and c(9-12). The alpha and beta chains form an alternating ring which encloses part of the gamma chain. CF(1) is attached to CF(0) by a central stalk formed by the gamma and epsilon chains, while a peripheral stalk is formed by the delta and b chains.

The protein resides in the cell membrane. The catalysed reaction is ATP + H2O + 4 H(+)(in) = ADP + phosphate + 5 H(+)(out). In terms of biological role, produces ATP from ADP in the presence of a proton gradient across the membrane. The alpha chain is a regulatory subunit. This is ATP synthase subunit alpha from Mycobacterium sp. (strain JLS).